A 509-amino-acid chain; its full sequence is Cytochrome P450 monooxygenase ORF9 (509 aa).

Transmembrane regions (helical) follow at residues Ile20–Val40 and Leu309–Leu329. N-linked (GlcNAc...) asparagine glycosylation is present at Asn353. Residue Cys448 coordinates heme.

It belongs to the cytochrome P450 family. It depends on heme as a cofactor.

It is found in the membrane. It functions in the pathway sesquiterpene biosynthesis. Functionally, cytochrome P450 monooxygenase; part of the gene cluster that mediates the biosynthesis of PR-toxin, a bicyclic sesquiterpene belonging to the eremophilane class and acting as a mycotoxin. The first step of the pathway is catalyzed by the aristolochene synthase which performs the cyclization of trans,trans-farnesyl diphosphate (FPP) to the bicyclic sesquiterpene aristolochene. Following the formation of aristolochene, the non-oxygenated aristolochene is converted to the trioxygenated intermediate eremofortin B, via 7-epi-neopetasone. This conversion appears to involve three enzymes, a hydroxysterol oxidase-like enzyme, the quinone-oxidase prx3 that forms the quinone-type-structure in the bicyclic nucleus of aristolochene with the C8-oxo group and the C-3 hydroxyl group, and the P450 monooxygenase ORF6 that introduces the epoxide at the double bond between carbons 1 and 2. No monoxy or dioxy-intermediates have been reported to be released to the broth, so these three early oxidative reactions may be coupled together. Eremofortin B is further oxidized by another P450 monooxygenase, that introduces a second epoxide between carbons 7 and 11 prior to acetylation to eremofortin A by the acetyltransferase ORF8. The second epoxidation may be performed by a second P450 monooxygenase. After the acetylation step, eremofortin A is converted to eremofortin C and then to PR-toxin. First the conversion of eremofortin A to eremofortin C proceeds by oxidation of the side chain of the molecule at C-12 and is catalyzed by the short-chain oxidoreductase prx1. The cytochrome P450 monooxygenase ORF6 is probably also involved in this step. The primary alcohol formed at C-12 is finally oxidized by the short-chain alcohol dehydrogenase prx4 that forms PR-toxin. In Penicillium roqueforti (strain FM164), this protein is Cytochrome P450 monooxygenase ORF9.